The primary structure comprises 185 residues: Ribosome-recycling factor (185 aa).

Belongs to the RRF family.

The protein localises to the cytoplasm. Responsible for the release of ribosomes from messenger RNA at the termination of protein biosynthesis. May increase the efficiency of translation by recycling ribosomes from one round of translation to another. This is Ribosome-recycling factor from Arthrobacter sp. (strain FB24).